Reading from the N-terminus, the 140-residue chain is Small ribosomal subunit protein uS12m (140 aa).

The N-terminal 30 residues, 1–30, are a transit peptide targeting the mitochondrion; that stretch reads MNFLRQSFGITKQLASQAIQCSYETAVRGM.

It belongs to the universal ribosomal protein uS12 family.

It localises to the mitochondrion. The sequence is that of Small ribosomal subunit protein uS12m (tko) from Drosophila melanogaster (Fruit fly).